Consider the following 376-residue polypeptide: Deoxyguanosinetriphosphate triphosphohydrolase-like protein (376 aa).

Residues 1 to 32 form a disordered region; it reads MEPSFAPYAAHSSQTRGRVHREAPAAPRSEFQ. Positions 65-196 constitute an HD domain; that stretch reads RLTHSIEVAQ…ANLADEIAYN (132 aa).

This sequence belongs to the dGTPase family. Type 2 subfamily.

The polypeptide is Deoxyguanosinetriphosphate triphosphohydrolase-like protein (Thiobacillus denitrificans (strain ATCC 25259 / T1)).